The sequence spans 100 residues: Small ribosomal subunit protein uS14c (100 aa).

The protein belongs to the universal ribosomal protein uS14 family. As to quaternary structure, part of the 30S ribosomal subunit.

The protein localises to the plastid. It is found in the chloroplast. Functionally, binds 16S rRNA, required for the assembly of 30S particles. The polypeptide is Small ribosomal subunit protein uS14c (Nymphaea alba (White water-lily)).